Reading from the N-terminus, the 316-residue chain is ATP synthase gamma chain (316 aa).

Belongs to the ATPase gamma chain family. As to quaternary structure, F-type ATPases have 2 components, CF(1) - the catalytic core - and CF(0) - the membrane proton channel. CF(1) has five subunits: alpha(3), beta(3), gamma(1), delta(1), epsilon(1). CF(0) has three main subunits: a, b and c.

Its subcellular location is the cellular thylakoid membrane. Produces ATP from ADP in the presence of a proton gradient across the membrane. The gamma chain is believed to be important in regulating ATPase activity and the flow of protons through the CF(0) complex. This is ATP synthase gamma chain from Prochlorococcus marinus (strain MIT 9312).